The primary structure comprises 226 residues: Leucyl/phenylalanyl-tRNA--protein transferase (226 aa).

The protein belongs to the L/F-transferase family.

Its subcellular location is the cytoplasm. The enzyme catalyses N-terminal L-lysyl-[protein] + L-leucyl-tRNA(Leu) = N-terminal L-leucyl-L-lysyl-[protein] + tRNA(Leu) + H(+). It carries out the reaction N-terminal L-arginyl-[protein] + L-leucyl-tRNA(Leu) = N-terminal L-leucyl-L-arginyl-[protein] + tRNA(Leu) + H(+). It catalyses the reaction L-phenylalanyl-tRNA(Phe) + an N-terminal L-alpha-aminoacyl-[protein] = an N-terminal L-phenylalanyl-L-alpha-aminoacyl-[protein] + tRNA(Phe). Its function is as follows. Functions in the N-end rule pathway of protein degradation where it conjugates Leu, Phe and, less efficiently, Met from aminoacyl-tRNAs to the N-termini of proteins containing an N-terminal arginine or lysine. This is Leucyl/phenylalanyl-tRNA--protein transferase from Pseudomonas aeruginosa (strain UCBPP-PA14).